The primary structure comprises 78 residues: Large ribosomal subunit protein bL28 (78 aa).

This sequence belongs to the bacterial ribosomal protein bL28 family.

This Pasteurella multocida (strain Pm70) protein is Large ribosomal subunit protein bL28.